A 125-amino-acid polypeptide reads, in one-letter code: Fumarate reductase subunit D (125 aa).

3 consecutive transmembrane segments (helical) span residues Phe-30 to Ile-50, Val-60 to Pro-80, and Ile-105 to Leu-125.

Belongs to the FrdD family. In terms of assembly, part of an enzyme complex containing four subunits: a flavoprotein (FrdA), an iron-sulfur protein (FrdB), and two hydrophobic anchor proteins (FrdC and FrdD).

Its subcellular location is the cell inner membrane. Functionally, anchors the catalytic components of the fumarate reductase complex to the cell membrane, binds quinones. The chain is Fumarate reductase subunit D from Vibrio vulnificus (strain YJ016).